Here is a 622-residue protein sequence, read N- to C-terminus: Probable potassium transport system protein Kup (622 aa).

The next 12 membrane-spanning stretches (helical) occupy residues 8-28, 50-70, 100-120, 137-157, 169-189, 203-223, 247-267, 285-305, 337-357, 366-386, 392-412, and 419-439; these read LAALTLGAIGVVYGDIGTSVL, VLSVLFWTLTVIVSLKYVVLV, GWLLGLGIFGTSLFYGDGVIT, PHFGKAVIPLTLVVLFGLFAV, FGPVTLVWFFTIAALGVPHIV, ALGFILGNPGISFIILGAVVL, WFSVAMPALTINYFGQGALLL, ALVPLVVLATMATVIASQALI, IYLPFVNWSLFVAIVLAVVMF, AYGIAVTLDMLITTVLTFFVI, YPLALCVATTGFFFVVDLAFF, and LLQGGWFPLMIGGLVFTLMMT.

This sequence belongs to the HAK/KUP transporter (TC 2.A.72) family.

It is found in the cell inner membrane. The enzyme catalyses K(+)(in) + H(+)(in) = K(+)(out) + H(+)(out). Transport of potassium into the cell. Likely operates as a K(+):H(+) symporter. In Acidovorax ebreus (strain TPSY) (Diaphorobacter sp. (strain TPSY)), this protein is Probable potassium transport system protein Kup.